A 557-amino-acid chain; its full sequence is MLGTLGLWTLLPAAAQVSPNRRTCVFFEAPGVRGSTKTLGEVVDAGPGPPKGIRCLYSHCCFGIWNLTHGRAQVEMQGCLDSDEPGCESLHCDPVPRAHPSPSSTLFTCSCGTDFCNANYSHLPPSGNRGAPGPQEPQATPGGPIWMAQLLLGVFLVLLLSIIILALLQRKACRVQGGSDPEPEPGSGGDCSEELPELAELRFSQVIQEGGHAVVWAGRLQGEMVAIKAFPPRAVAQFRAERAVYQLLGLQHNHIVRFITAGQGGPGPLPSGPLLVLELYPKGSLCHYLTQYTSDWGSSLRMALSLAEGLAFLHGERWQDGQYKPGIAHRDLSSQNVLIREDRSCAIGDLGLALVLPGLAQPPALAPTQPRGPAAILEAGTQRYMAPELLDKTLDLQDWGTALQRADVYSLALLLWEILSRCSDLRPDHRPPPFQLAYEAELGSNPSACELWALAVAERKRPNIPSSWSCSATDPRGLRELLEDCWDADPEARLTAECVQQRLAALAYPQVASSFPESCPQGCPENCPAAPASAAFPCRPQQSSCLLSVQQGSGSKS.

Positions 1–17 are cleaved as a signal peptide; it reads MLGTLGLWTLLPAAAQV. Residues 18–144 are Extracellular-facing; it reads SPNRRTCVFF…QEPQATPGGP (127 aa). Cystine bridges form between Cys-55/Cys-79 and Cys-92/Cys-109. Asn-66 carries an N-linked (GlcNAc...) asparagine glycan. Asn-119 is a glycosylation site (N-linked (GlcNAc...) asparagine). A helical membrane pass occupies residues 145 to 165; it reads IWMAQLLLGVFLVLLLSIIIL. Over 166 to 557 the chain is Cytoplasmic; it reads ALLQRKACRV…SVQQGSGSKS (392 aa). The Protein kinase domain occupies 201–511; the sequence is LRFSQVIQEG…RLAALAYPQV (311 aa). ATP is bound by residues 207 to 215 and Lys-228; that span reads IQEGGHAVV. Catalysis depends on Asp-331, which acts as the Proton acceptor.

The protein belongs to the protein kinase superfamily. TKL Ser/Thr protein kinase family. TGFB receptor subfamily. In terms of assembly, interacts with type I receptor ACVR1. Mg(2+) serves as cofactor. Requires Mn(2+) as cofactor.

It localises to the membrane. It catalyses the reaction L-threonyl-[receptor-protein] + ATP = O-phospho-L-threonyl-[receptor-protein] + ADP + H(+). The catalysed reaction is L-seryl-[receptor-protein] + ATP = O-phospho-L-seryl-[receptor-protein] + ADP + H(+). Functionally, on ligand binding, forms a receptor complex consisting of two type II and two type I transmembrane serine/threonine kinases. Type II receptors phosphorylate and activate type I receptors which autophosphorylate, then bind and activate SMAD transcriptional regulators. Receptor for anti-Muellerian hormone. This Rattus norvegicus (Rat) protein is Anti-Muellerian hormone type-2 receptor (Amhr2).